The following is a 294-amino-acid chain: Cutinase (294 aa).

The signal sequence occupies residues Met-1–Ala-33. A disulfide bridge connects residues Cys-36 and Cys-107. Ser-118 functions as the Nucleophile in the catalytic mechanism. A disulfide bridge connects residues Cys-180 and Cys-187. The active site involves Asp-184. His-198 (proton donor/acceptor) is an active-site residue. Positions Gly-222–Val-241 are disordered. Residues Thr-226 to Val-236 are compositionally biased toward pro residues. Positions Cys-240–Cys-294 are may be involved in substrate binding.

It belongs to the cutinase family.

The protein resides in the secreted. It carries out the reaction cutin + H2O = cutin monomers.. The catalysed reaction is a tetradecanoate ester + H2O = an aliphatic alcohol + tetradecanoate + H(+). It catalyses the reaction hexadecanoate ester + H2O = an aliphatic alcohol + hexadecanoate + H(+). The enzyme catalyses a butanoate ester + H2O = an aliphatic alcohol + butanoate + H(+). It carries out the reaction an octanoate ester + H2O = an aliphatic alcohol + octanoate + H(+). Its function is as follows. Catalyzes the hydrolysis of cutin, a polyester that forms the structure of plant cuticle. Shows esterase activity towards p-nitrophenol-linked aliphatic esters (pNP-aliphatic esters). Can depolymerize synthetic polyesters such as poly(epsilon-caprolactone) (PCL) and poly(1,3-propylene adipate) (PPA). Exhibits some activity on poly(lactic acid) (PLA). Can bind but not hydrolyze poly(hydroxybutyrate) (PHB). The protein is Cutinase of Kineococcus radiotolerans (strain ATCC BAA-149 / DSM 14245 / SRS30216).